Here is a 93-residue protein sequence, read N- to C-terminus: Small ribosomal subunit protein uS19 (93 aa).

It belongs to the universal ribosomal protein uS19 family.

In terms of biological role, protein S19 forms a complex with S13 that binds strongly to the 16S ribosomal RNA. This is Small ribosomal subunit protein uS19 from Clostridium acetobutylicum (strain ATCC 824 / DSM 792 / JCM 1419 / IAM 19013 / LMG 5710 / NBRC 13948 / NRRL B-527 / VKM B-1787 / 2291 / W).